The primary structure comprises 303 residues: Signal recognition particle receptor FtsY (303 aa).

GTP is bound by residues 108-115 (GVNGAGKT), 190-194 (DTAGR), and 254-257 (TKLD).

The protein belongs to the GTP-binding SRP family. FtsY subfamily. In terms of assembly, part of the signal recognition particle protein translocation system, which is composed of SRP and FtsY. SRP is a ribonucleoprotein composed of Ffh and a 4.5S RNA molecule.

Its subcellular location is the cell inner membrane. It localises to the cytoplasm. It carries out the reaction GTP + H2O = GDP + phosphate + H(+). In terms of biological role, involved in targeting and insertion of nascent membrane proteins into the cytoplasmic membrane. Acts as a receptor for the complex formed by the signal recognition particle (SRP) and the ribosome-nascent chain (RNC). Interaction with SRP-RNC leads to the transfer of the RNC complex to the Sec translocase for insertion into the membrane, the hydrolysis of GTP by both Ffh and FtsY, and the dissociation of the SRP-FtsY complex into the individual components. The protein is Signal recognition particle receptor FtsY of Rickettsia conorii (strain ATCC VR-613 / Malish 7).